Consider the following 54-residue polypeptide: Large ribosomal subunit protein eL37 (54 aa).

Residues Cys20, Cys23, Cys35, and Cys38 each contribute to the Zn(2+) site. A C4-type zinc finger spans residues 20 to 38 (CRRCGHHTYNVRTKRCSHC).

The protein belongs to the eukaryotic ribosomal protein eL37 family. Zn(2+) is required as a cofactor.

In terms of biological role, binds to the 23S rRNA. The sequence is that of Large ribosomal subunit protein eL37 (rpl37e) from Thermoplasma acidophilum (strain ATCC 25905 / DSM 1728 / JCM 9062 / NBRC 15155 / AMRC-C165).